We begin with the raw amino-acid sequence, 144 residues long: MKIMVLHGPNLNLLGKREPSVYGSVTLEEINQKLAELAGELGVEICCKQSNSEGELVDLLHRAAEEADAVVFNPGAFTHYSYALRDAVSAIGIPTIEVHLSNIYSREDFRKHSVIAPVASGHICGMGVTGYLLALRAAAALAGT.

Tyrosine 22 (proton acceptor) is an active-site residue. Residues asparagine 73, histidine 79, and aspartate 86 each coordinate substrate. The Proton donor role is filled by histidine 99. Substrate contacts are provided by residues 100-101 (LS) and arginine 110.

Belongs to the type-II 3-dehydroquinase family. Homododecamer.

It carries out the reaction 3-dehydroquinate = 3-dehydroshikimate + H2O. It participates in metabolic intermediate biosynthesis; chorismate biosynthesis; chorismate from D-erythrose 4-phosphate and phosphoenolpyruvate: step 3/7. In terms of biological role, catalyzes a trans-dehydration via an enolate intermediate. In Pelotomaculum thermopropionicum (strain DSM 13744 / JCM 10971 / SI), this protein is 3-dehydroquinate dehydratase.